The chain runs to 382 residues: uncharacterized protein (382 aa).

The next 12 membrane-spanning stretches (helical) occupy residues 14–34 (GLLLLTLAIAVLNTLVPLWLA), 45–65 (VVSSSYFTGNLVGTLLTGYVI), 79–99 (FIFAAGCAGLGLMIGFWSWLA), 102–122 (FVAGIGCAMIWVVVESALMCS), 131–151 (LLAAYMMVYYVGTFLGQLLVS), 157–177 (LMSVLPWVTGLTLAGILPLLF), 204–224 (LGVNGCIISGIVLGSLYGLMP), 235–255 (ASIGFWMAVLVSAGILGQWPI), 270–290 (VQVFVVILGSIAMLSQAAMAP), 291–311 (ALFILGAAGFTLYPVAMAWAC), 325–345 (ALLLSYTVGSLLGPSFTAMLM), and 348–368 (FSDNLLFIMIASVSFIYLLML).

Belongs to the major facilitator superfamily. YcaD (TC 2.A.1.26) family.

The protein resides in the cell inner membrane. This is an uncharacterized protein from Escherichia coli O6:K15:H31 (strain 536 / UPEC).